A 578-amino-acid polypeptide reads, in one-letter code: CTP synthase 2 (578 aa).

One can recognise a Glutamine amidotransferase type-1 domain in the interval 305–564 (KIALVGKYTN…VAAASGTLGD (260 aa)). Residues cysteine 404, histidine 537, and glutamate 539 each act as for GATase activity in the active site.

It belongs to the CTP synthase family. As to quaternary structure, homodimer. Oligomerizes to a tetramer in the presence of its substrates UTP and ATP. Requires Mg(2+) as cofactor.

The protein resides in the cytoplasm. The enzyme catalyses UTP + L-glutamine + ATP + H2O = CTP + L-glutamate + ADP + phosphate + 2 H(+). Its pathway is pyrimidine metabolism; CTP biosynthesis via de novo pathway; CTP from UDP: step 2/2. Its activity is regulated as follows. Activated by GTP. Subject to allosteric product inhibition by CTP. Inhibited by p-chloromercuriphenylsulfonic acid, N-ethylmaleimide and cyclopentenylcytosine (CPEC). In terms of biological role, catalyzes the ATP-dependent amination of UTP to CTP with either L-glutamine or ammonia as the source of nitrogen. Plays an important role in the regulation of phospholipid synthesis. In Saccharomyces cerevisiae (strain YJM789) (Baker's yeast), this protein is CTP synthase 2 (URA8).